Here is a 433-residue protein sequence, read N- to C-terminus: Glutamate-1-semialdehyde 2,1-aminomutase (433 aa).

Position 269 is an N6-(pyridoxal phosphate)lysine (Lys269).

It belongs to the class-III pyridoxal-phosphate-dependent aminotransferase family. HemL subfamily. As to quaternary structure, homodimer. Requires pyridoxal 5'-phosphate as cofactor.

The protein localises to the cytoplasm. It carries out the reaction (S)-4-amino-5-oxopentanoate = 5-aminolevulinate. The protein operates within porphyrin-containing compound metabolism; protoporphyrin-IX biosynthesis; 5-aminolevulinate from L-glutamyl-tRNA(Glu): step 2/2. This chain is Glutamate-1-semialdehyde 2,1-aminomutase, found in Francisella philomiragia subsp. philomiragia (strain ATCC 25017 / CCUG 19701 / FSC 153 / O#319-036).